Consider the following 185-residue polypeptide: UPF0200 protein TON_1344 (185 aa).

7–14 (GMPGSGKS) serves as a coordination point for ATP.

This sequence belongs to the UPF0200 family.

This Thermococcus onnurineus (strain NA1) protein is UPF0200 protein TON_1344.